An 859-amino-acid polypeptide reads, in one-letter code: MKAMHTFENHTPMMKQYLKIKAENPDVLLFYRMGDFYELFYDDAKKAAELLDISLTKRGQSAGQPVPMAGVPYHAIEGYLAKLVQLGESVAICEQVGEPVIAKGPVERQVVRIVTPGTVSDEALLPEKQDNLIATIYQEKTQFGLAVLDMTSGCFQISELQDAASLQAELQRIQPVELLYSEALEDKHLIEQFKGLRRRPLWEFELSTAIQLLNRQFGTKDLRGFGVEKAVLGLCAAGCLLQYAKETQRTALPHIQSISLLQNSDTVQIDASTRRNLELTQNLAGGTENTLAAILDKCVTPMGSRLLKRWIHQPIRNIEKLQYRQQHIQMLLQQNLVEELQPLLRQVGDMERILARVALRSARPRDLTRLRTALEQIPFIQHQLTKIPHFVAFSQQIADFSVQLALLQRAIIDNPPLLIRDGGVIAEGYNEELDEWRSLSEGATRYLKDLEQRERANTGIDTLKIGFNAVHGYYIQISQGQAHKAPLHYVRRQTLKNVERYIIPELKTYEEKVLKAKGASLALEKQLYDEIFDQLLPHLGDLQLASLTLAELDVLTNLAERAETLNYVQPQFSTQVGLQIMQGRHPVVEQVLKEPFIANPVELNQKRHLLIITGPNMGGKSTYMRQTALITLMAYIGSFVPAESAVIGPIDRIFTRIGASDDLASGRSTFMVEMTEMANILHQATEQSLVLIDEIGRGTSTYDGLSLAWACAEQLAQKIRSLTLFATHYFELTGLPEKIEGIHNVHLDAFEHNDSIAFMHSVQEGAASKSYGLAVAALAGVPQNVIKSAKQKLKQLETLSQQNSYQSQSVLTQVQGELTLMEEEENTSAVIETLKTLDPNELSPKQALECLYQLKKMLN.

Residue 614 to 621 (GPNMGGKS) participates in ATP binding.

Belongs to the DNA mismatch repair MutS family.

Functionally, this protein is involved in the repair of mismatches in DNA. It is possible that it carries out the mismatch recognition step. This protein has a weak ATPase activity. The sequence is that of DNA mismatch repair protein MutS from Histophilus somni (strain 2336) (Haemophilus somnus).